Consider the following 114-residue polypeptide: Small ribosomal subunit protein uS17 (114 aa).

Belongs to the universal ribosomal protein uS17 family. Part of the 30S ribosomal subunit.

Functionally, one of the primary rRNA binding proteins, it binds specifically to the 5'-end of 16S ribosomal RNA. This is Small ribosomal subunit protein uS17 from Aeropyrum pernix (strain ATCC 700893 / DSM 11879 / JCM 9820 / NBRC 100138 / K1).